Consider the following 457-residue polypeptide: Protein unc-93 homolog A (457 aa).

A run of 5 helical transmembrane segments spans residues 8–28 (VLVL…LQSL), 42–62 (ALST…PVLI), 65–85 (LGCK…SLGN), 86–106 (FYAS…GAAA), and 140–160 (IFFL…SLVF). Asn-190 carries N-linked (GlcNAc...) asparagine glycosylation. A run of 6 helical transmembrane segments spans residues 202-222 (TLLG…AVFL), 257-277 (LRLL…LSGD), 291-311 (FVGY…VLFG), 320-340 (TVLF…LLLW), 344-364 (PSQL…DAVW), and 395-415 (FVIA…YVLL). The segment at 438–457 (GPLAAGRTKPAEDGATQTKL) is disordered.

Belongs to the unc-93 family.

The protein resides in the cell membrane. The chain is Protein unc-93 homolog A (UNC93A) from Bos taurus (Bovine).